We begin with the raw amino-acid sequence, 293 residues long: Neugrin (293 aa).

Residues 1-15 (MALSLSLFLGGRVRA) form the signal peptide. Disordered stretches follow at residues 25–48 (QGVAGPGSISREPDPDSDWEPEER) and 162–211 (PLSA…EKNK). A Phosphoserine modification is found at Ser41. The N-linked (GlcNAc...) asparagine glycan is linked to Asn270.

The protein belongs to the neugrin family. Forms a regulatory protein-RNA complex, consisting of RCC1L, NGRN, RPUSD3, RPUSD4, TRUB2, FASTKD2 and 16S mt-rRNA. Interacts with 16S mt-rRNA; this interaction is direct.

It localises to the nucleus. The protein resides in the secreted. It is found in the mitochondrion membrane. Functionally, plays an essential role in mitochondrial ribosome biogenesis. As a component of a functional protein-RNA module, consisting of RCC1L, NGRN, RPUSD3, RPUSD4, TRUB2, FASTKD2 and 16S mitochondrial ribosomal RNA (16S mt-rRNA), controls 16S mt-rRNA abundance and is required for intra-mitochondrial translation of core subunits of the oxidative phosphorylation system. The sequence is that of Neugrin (Ngrn) from Rattus norvegicus (Rat).